Reading from the N-terminus, the 1199-residue chain is DNA-directed RNA polymerase subunit beta' (1199 aa).

The Zn(2+) site is built by Cys-60, Cys-62, Cys-75, and Cys-78. The Mg(2+) site is built by Asp-449, Asp-451, and Asp-453. Zn(2+) is bound by residues Cys-818, Cys-892, Cys-899, and Cys-902.

It belongs to the RNA polymerase beta' chain family. In terms of assembly, the RNAP catalytic core consists of 2 alpha, 1 beta, 1 beta' and 1 omega subunit. When a sigma factor is associated with the core the holoenzyme is formed, which can initiate transcription. The cofactor is Mg(2+). It depends on Zn(2+) as a cofactor.

It carries out the reaction RNA(n) + a ribonucleoside 5'-triphosphate = RNA(n+1) + diphosphate. Functionally, DNA-dependent RNA polymerase catalyzes the transcription of DNA into RNA using the four ribonucleoside triphosphates as substrates. This chain is DNA-directed RNA polymerase subunit beta', found in Bacillus pumilus (strain SAFR-032).